The following is a 155-amino-acid chain: 6,7-dimethyl-8-ribityllumazine synthase (155 aa).

5-amino-6-(D-ribitylamino)uracil is bound by residues Phe-24, 58-60 (AFE), and 82-84 (VII). 87 to 88 (ST) provides a ligand contact to (2S)-2-hydroxy-3-oxobutyl phosphate. Catalysis depends on His-90, which acts as the Proton donor. Phe-115 provides a ligand contact to 5-amino-6-(D-ribitylamino)uracil. Residue Arg-129 participates in (2S)-2-hydroxy-3-oxobutyl phosphate binding.

The protein belongs to the DMRL synthase family.

The catalysed reaction is (2S)-2-hydroxy-3-oxobutyl phosphate + 5-amino-6-(D-ribitylamino)uracil = 6,7-dimethyl-8-(1-D-ribityl)lumazine + phosphate + 2 H2O + H(+). The protein operates within cofactor biosynthesis; riboflavin biosynthesis; riboflavin from 2-hydroxy-3-oxobutyl phosphate and 5-amino-6-(D-ribitylamino)uracil: step 1/2. Catalyzes the formation of 6,7-dimethyl-8-ribityllumazine by condensation of 5-amino-6-(D-ribitylamino)uracil with 3,4-dihydroxy-2-butanone 4-phosphate. This is the penultimate step in the biosynthesis of riboflavin. This chain is 6,7-dimethyl-8-ribityllumazine synthase, found in Chlorobium chlorochromatii (strain CaD3).